Consider the following 596-residue polypeptide: Malto-oligosyltrehalose trehalohydrolase (596 aa).

263–268 (RLDAVH) is a binding site for substrate. The active-site Nucleophile is the Asp-265. Glu-302 (proton donor) is an active-site residue. Substrate contacts are provided by residues 327-331 (DDFHH) and 397-402 (HDQIGN).

Belongs to the glycosyl hydrolase 13 family.

The protein resides in the cytoplasm. It carries out the reaction hydrolysis of (1-&gt;4)-alpha-D-glucosidic linkage in 4-alpha-D-[(1-&gt;4)-alpha-D-glucanosyl]n trehalose to yield trehalose and (1-&gt;4)-alpha-D-glucan.. It functions in the pathway glycan biosynthesis; trehalose biosynthesis. In Rhizobium sp. (strain M-11), this protein is Malto-oligosyltrehalose trehalohydrolase (treZ).